The chain runs to 127 residues: Putative membrane protein insertion efficiency factor (127 aa).

The disordered stretch occupies residues Asp71 to Glu106. Positions Arg88–Thr98 are enriched in basic and acidic residues.

It belongs to the UPF0161 family.

It is found in the cell inner membrane. Could be involved in insertion of integral membrane proteins into the membrane. The polypeptide is Putative membrane protein insertion efficiency factor (Sorangium cellulosum (strain So ce56) (Polyangium cellulosum (strain So ce56))).